The primary structure comprises 295 residues: Acetylglutamate kinase (295 aa).

Residues 70 to 71 (GG), arginine 92, and asparagine 191 each bind substrate.

Belongs to the acetylglutamate kinase family. ArgB subfamily.

It is found in the cytoplasm. The enzyme catalyses N-acetyl-L-glutamate + ATP = N-acetyl-L-glutamyl 5-phosphate + ADP. The protein operates within amino-acid biosynthesis; L-arginine biosynthesis; N(2)-acetyl-L-ornithine from L-glutamate: step 2/4. Its function is as follows. Catalyzes the ATP-dependent phosphorylation of N-acetyl-L-glutamate. The chain is Acetylglutamate kinase from Mycobacterium avium (strain 104).